The following is a 187-amino-acid chain: GTP cyclohydrolase 1 1 (187 aa).

The protein belongs to the GTP cyclohydrolase I family. As to quaternary structure, homomer.

It carries out the reaction GTP + H2O = 7,8-dihydroneopterin 3'-triphosphate + formate + H(+). It functions in the pathway cofactor biosynthesis; 7,8-dihydroneopterin triphosphate biosynthesis; 7,8-dihydroneopterin triphosphate from GTP: step 1/1. This Pseudomonas syringae pv. tomato (strain ATCC BAA-871 / DC3000) protein is GTP cyclohydrolase 1 1.